A 180-amino-acid polypeptide reads, in one-letter code: Large ribosomal subunit protein uL5 (180 aa).

This sequence belongs to the universal ribosomal protein uL5 family. In terms of assembly, part of the 50S ribosomal subunit; part of the 5S rRNA/L5/L18/L25 subcomplex. Contacts the 5S rRNA and the P site tRNA. Forms a bridge to the 30S subunit in the 70S ribosome.

This is one of the proteins that bind and probably mediate the attachment of the 5S RNA into the large ribosomal subunit, where it forms part of the central protuberance. In the 70S ribosome it contacts protein S13 of the 30S subunit (bridge B1b), connecting the 2 subunits; this bridge is implicated in subunit movement. Contacts the P site tRNA; the 5S rRNA and some of its associated proteins might help stabilize positioning of ribosome-bound tRNAs. The sequence is that of Large ribosomal subunit protein uL5 from Xanthomonas euvesicatoria pv. vesicatoria (strain 85-10) (Xanthomonas campestris pv. vesicatoria).